Consider the following 239-residue polypeptide: MVIKAQSPAGFAEEYIIESIWNNRFPPGTILPAERELSELIGVTRTTLREVLQRLARDGWLTIQHGKPTKVNNFWETSGLNILETLARLDHDSVPQLIDNLLAVRTNIATIFVRTAIRNHPEKAQEILAQAQTVDDNAESFTALDYGIFRGLAFASGNPIYGLILNGLKGLYTRVGRYYFSNPEARKLALTFYSRLSTLCDEKAYDQVLDCLRAYGKESGAIWHSMQGTMPSDLAEARR.

The region spanning 6–74 (QSPAGFAEEY…HGKPTKVNNF (69 aa)) is the HTH gntR-type domain. The segment at residues 34–53 (ERELSELIGVTRTTLREVLQ) is a DNA-binding region (H-T-H motif).

In terms of assembly, homodimer.

The protein resides in the cytoplasm. In terms of biological role, multifunctional regulator of fatty acid metabolism. In Yersinia enterocolitica serotype O:8 / biotype 1B (strain NCTC 13174 / 8081), this protein is Fatty acid metabolism regulator protein.